Consider the following 148-residue polypeptide: Ribonuclease H (148 aa).

The region spanning 3–144 (DKEQVVIYTD…ADQLANRGVA (142 aa)) is the RNase H type-1 domain. The Mg(2+) site is built by Asp12, Glu50, Asp72, and Asp136. Positions 125 to 148 (GHTGDPGNERADQLANRGVAELPR) are disordered.

The protein belongs to the RNase H family. As to quaternary structure, monomer. It depends on Mg(2+) as a cofactor.

It is found in the cytoplasm. The catalysed reaction is Endonucleolytic cleavage to 5'-phosphomonoester.. Its function is as follows. Endonuclease that specifically degrades the RNA of RNA-DNA hybrids. The sequence is that of Ribonuclease H from Pseudomonas paraeruginosa (strain DSM 24068 / PA7) (Pseudomonas aeruginosa (strain PA7)).